Here is a 607-residue protein sequence, read N- to C-terminus: Elongation factor 4 (607 aa).

A tr-type G domain is found at 11–193 (SKIRNFSIIA…QIVEKVPAPT (183 aa)). Residues 23–28 (DHGKST) and 140–143 (NKID) each bind GTP.

Belongs to the TRAFAC class translation factor GTPase superfamily. Classic translation factor GTPase family. LepA subfamily.

Its subcellular location is the cell membrane. It catalyses the reaction GTP + H2O = GDP + phosphate + H(+). Its function is as follows. Required for accurate and efficient protein synthesis under certain stress conditions. May act as a fidelity factor of the translation reaction, by catalyzing a one-codon backward translocation of tRNAs on improperly translocated ribosomes. Back-translocation proceeds from a post-translocation (POST) complex to a pre-translocation (PRE) complex, thus giving elongation factor G a second chance to translocate the tRNAs correctly. Binds to ribosomes in a GTP-dependent manner. This Bacillus cereus (strain Q1) protein is Elongation factor 4.